A 374-amino-acid polypeptide reads, in one-letter code: Alcohol dehydrogenase 3, mitochondrial (374 aa).

The transit peptide at 1 to 26 (MLRLTSARSIVSPLRKGAFGSIRTLA) directs the protein to the mitochondrion. Residues cysteine 70, histidine 93, cysteine 124, cysteine 127, cysteine 130, cysteine 138, and cysteine 180 each coordinate Zn(2+). Residues 204 to 210 (GAAGGLG), aspartate 228, lysine 233, 295 to 297 (VGL), and arginine 367 contribute to the NAD(+) site.

Belongs to the zinc-containing alcohol dehydrogenase family. As to quaternary structure, homotetramer. It depends on Zn(2+) as a cofactor.

The protein localises to the mitochondrion matrix. It catalyses the reaction a primary alcohol + NAD(+) = an aldehyde + NADH + H(+). The enzyme catalyses a secondary alcohol + NAD(+) = a ketone + NADH + H(+). The chain is Alcohol dehydrogenase 3, mitochondrial (ADH3) from Kluyveromyces lactis (strain ATCC 8585 / CBS 2359 / DSM 70799 / NBRC 1267 / NRRL Y-1140 / WM37) (Yeast).